The chain runs to 624 residues: Chaperone protein HtpG (624 aa).

Residues 1 to 336 (MKGQETRGFQ…SNDLPLNVSR (336 aa)) form an a; substrate-binding region. A b region spans residues 337–552 (EILQDSSVTR…ADEMSTQMAK (216 aa)). Residues 553–624 (LFAAAGQAAP…IRRMNQLLAS (72 aa)) form a c region.

This sequence belongs to the heat shock protein 90 family. As to quaternary structure, homodimer.

The protein resides in the cytoplasm. Its function is as follows. Molecular chaperone. Has ATPase activity. This Klebsiella pneumoniae subsp. pneumoniae (strain ATCC 700721 / MGH 78578) protein is Chaperone protein HtpG.